The following is a 157-amino-acid chain: Small ribosomal subunit protein uS7 (157 aa).

The protein belongs to the universal ribosomal protein uS7 family. In terms of assembly, part of the 30S ribosomal subunit. Contacts proteins S9 and S11.

In terms of biological role, one of the primary rRNA binding proteins, it binds directly to 16S rRNA where it nucleates assembly of the head domain of the 30S subunit. Is located at the subunit interface close to the decoding center, probably blocks exit of the E-site tRNA. The protein is Small ribosomal subunit protein uS7 of Herpetosiphon aurantiacus (strain ATCC 23779 / DSM 785 / 114-95).